Consider the following 736-residue polypeptide: MGGNVMTDDKMNSVTSGANKQETGRDMSNRDWWPNHLKLEILHQHSSKSNPMGEDFNYAKEFKSLDLAAVKKDLAALMTDSQDWWPADFGHYGPLFIRMAWHSAGTYRAGDGRGGGGRGQQRFAPLNSWPDNVNLDKARRLLWPIKQKYGRKISWADLMILTGNVAMETMGFKTFGFGGGREDVWEPDQDVYWGSEDTWLGDERYTGDRDLENPLAAVQMGLIYVNPEGPNGNPDPIAAAKDIREVFARMAMNDEETVALIAGGHAFGKTHGAGPASHVGPEPEAASIEAQGLGWKSSFGTGKGDDTITGGLEVTWTNTPTKWSNNFFRILFGYEWELTKSPAGAYQWKPKGGAGAGTIPDAHDPSKRHAPSMMTTDLSLRFDPVYEKISRHFYENPGQLADSFARAWFKLTHRDMGPRARYLGPEVPAEELIWQDPIPAVNHELIDEKDIAFLKDRILASGLSISQLVSTAWVSASTFRGSDKRGGANGARIRLAPQKDWEVNQPAELAKVLNTLEGIQSEFNSAASGGKKVSLADLIVLAGCAGVEQAAKNAGYDVTVPFLPGRMDALQEQTDVVSFALLEPIADGFRNYLKAQYPLPAEELLVDKAQLLTLTAPEMTVLVGGMRVLNTNFGHTQHGVFTQKPEALTNDFFVNLLDMGTEWKAVSDVKDIFEGCDRKTGEVKWTGTRVDLIFGSNSQLRALAEVYGSADAQEKFVQDFVAAWTKVMNLDRFDLA.

The interval M1 to R30 is disordered. Positions N12 to Q21 are enriched in polar residues. Positions W101–Y224 form a cross-link, tryptophyl-tyrosyl-methioninium (Trp-Tyr) (with M-250). The Proton acceptor role is filled by H102. Residues Y224 to M250 constitute a cross-link (tryptophyl-tyrosyl-methioninium (Tyr-Met) (with W-101)). Heme b is bound at residue H265. The segment at K351 to M373 is disordered.

This sequence belongs to the peroxidase family. Peroxidase/catalase subfamily. As to quaternary structure, homodimer or homotetramer. It depends on heme b as a cofactor. Formation of the three residue Trp-Tyr-Met cross-link is important for the catalase, but not the peroxidase activity of the enzyme.

It carries out the reaction H2O2 + AH2 = A + 2 H2O. It catalyses the reaction 2 H2O2 = O2 + 2 H2O. Its function is as follows. Bifunctional enzyme with both catalase and broad-spectrum peroxidase activity. The protein is Catalase-peroxidase of Methanosarcina acetivorans (strain ATCC 35395 / DSM 2834 / JCM 12185 / C2A).